Here is a 739-residue protein sequence, read N- to C-terminus: Poly(A) polymerase alpha (739 aa).

Residues 1 to 17 (MPFPVTTQGSQQTQPPQ) show a composition bias toward low complexity. The disordered stretch occupies residues 1–23 (MPFPVTTQGSQQTQPPQKHYGIT). Ser-10 and Ser-24 each carry phosphoserine. Residues 100–102 (FGS), Thr-109, 113–115 (DID), Asp-167, Lys-228, Tyr-237, and 246–247 (GV) each bind ATP. Asp-113, Asp-115, and Asp-167 together coordinate Mg(2+). Residues Lys-444, Lys-445, Lys-506, and Lys-507 each participate in a glycyl lysine isopeptide (Lys-Gly) (interchain with G-Cter in SUMO) cross-link. Residues 490-507 (RKQLHQLLPSHVLQKKKK) carry the Nuclear localization signal 1 motif. Disordered stretches follow at residues 501-565 (VLQK…AVTA) and 580-700 (QINS…TIQT). Residues 508–643 (HSTEGVKLTP…AKIPNPIVGV (136 aa)) form a ser/Thr-rich region. A compositionally biased stretch (low complexity) spans 518 to 534 (LNDSSLDLSMDSDNSMS). The segment covering 535–557 (VPSPTSAMKTSPLNSSGSSQGRN) has biased composition (polar residues). Phosphoserine; by MAPK is present on Ser-537. Ser-558 carries the phosphoserine modification. The segment covering 583–594 (SSESSGGTSSES) has biased composition (low complexity). Residues 595 to 604 (IPQTATQPAI) are compositionally biased toward polar residues. Residues 611-620 (TVSRVVSSTR) are compositionally biased toward low complexity. Lys-635 and Lys-644 each carry N6-acetyllysine. Residues 644 to 659 (KRTSSPHKEESPKKTK) carry the Nuclear localization signal 2 motif. 2 stretches are compositionally biased toward basic and acidic residues: residues 649–660 (PHKEESPKKTKT) and 676–686 (GHDKTETKEQL). Positions 671 to 739 (CLALSGHDKT…KNSIKLRLNR (69 aa)) are required for interaction with NUDT21. Over residues 688–700 (TETSTTQSETIQT) the composition is skewed to low complexity. Position 730 is an N6-acetyllysine; alternate (Lys-730). Lys-730 participates in a covalent cross-link: Glycyl lysine isopeptide (Lys-Gly) (interchain with G-Cter in SUMO); alternate. A Phosphoserine modification is found at Ser-732. Lys-734 is subject to N6-acetyllysine; alternate. A Glycyl lysine isopeptide (Lys-Gly) (interchain with G-Cter in SUMO); alternate cross-link involves residue Lys-734.

It belongs to the poly(A) polymerase family. In terms of assembly, monomer. Found in a complex with CPSF1, FIP1L1 and PAPOLA. Interacts with AHCYL1 and FIP1L1; the interaction with AHCYL1 seems to increase interaction with FIP1L1. Interacts with NUDT21; the interaction is diminished by acetylation. Interacts with KPNB1; the interaction promotes PAP nuclear import and is inhibited by acetylation of PAP. Mg(2+) is required as a cofactor. Mn(2+) serves as cofactor. In terms of processing, polysumoylated. Varying sumoylation depending on tissue- and cell-type. Highly sumoylated in bladder and NIH 3T3 cells. Sumoylation is required for nuclear localization and enhances PAP stability. Desumoylated by SENP1. Inhibits polymerase activity. Post-translationally, hyperphosphorylation on multiple CDK2 consensus and non-consensus sites in the C-terminal Ser/Thr-rich region represses PAP activity in late M-phase. Phosphorylation/dephosphorylation may regulate the interaction between PAP and CPSF. Acetylated in the C-terminus. Acetylation decreases interaction with NUDT21 and KPNB1, and inhibits nuclear localization through inhibiting binding to the importin alpha/beta complex.

The protein resides in the nucleus. It carries out the reaction RNA(n) + ATP = RNA(n)-3'-adenine ribonucleotide + diphosphate. Its function is as follows. Polymerase that creates the 3'-poly(A) tail of mRNA's. Also required for the endoribonucleolytic cleavage reaction at some polyadenylation sites. May acquire specificity through interaction with a cleavage and polyadenylation specificity factor (CPSF) at its C-terminus. The sequence is that of Poly(A) polymerase alpha (PAPOLA) from Bos taurus (Bovine).